We begin with the raw amino-acid sequence, 130 residues long: RxLR effector protein PITG_14783 (130 aa).

A signal peptide spans 1 to 20; the sequence is MRLPYVFAATMATLLVSSNA. Positions 27–58 are disordered; that stretch reads AMLSSPNEQHQRQLRSHQTPVEDQEPDEERSL. Residues 38–56 carry the RxLR-dEER motif; it reads RQLRSHQTPVEDQEPDEER.

It belongs to the RxLR effector family.

It is found in the secreted. The protein localises to the host nucleus. Its subcellular location is the host cytoplasm. Functionally, effector that enhances P.infestans colonization of Nicotiana benthamiana leaves. The chain is RxLR effector protein PITG_14783 from Phytophthora infestans (strain T30-4) (Potato late blight agent).